A 396-amino-acid polypeptide reads, in one-letter code: Protein BOP3 (396 aa).

Disordered regions lie at residues 1–22 (MSTF…NNVN), 98–126 (GVPA…ENLP), 145–168 (PTPM…GISH), 203–239 (VARR…KFTN), 254–274 (RDQQ…QQDL), and 355–396 (REGR…LNST). Composition is skewed to polar residues over residues 111-124 (QPHN…SSEN), 159-168 (ASSSTGGISH), and 210-230 (GTKS…SRNL). The span at 355–369 (REGRQVHDDLDDRTC) shows a compositional bias: basic and acidic residues. Polar residues predominate over residues 370–396 (SESSSRNESPVRTITKDNSVGKILNST).

The protein localises to the cytoplasm. It localises to the nucleus. Its function is as follows. Involved in resistance to methylmercury. Overexpression suppresses a PAM1-SLV3 double null mutation. This chain is Protein BOP3 (BOP3), found in Saccharomyces cerevisiae (strain ATCC 204508 / S288c) (Baker's yeast).